Reading from the N-terminus, the 332-residue chain is DNA repair and recombination protein RadA (332 aa).

126-133 is an ATP binding site; that stretch reads GEFGSGKT.

It belongs to the eukaryotic RecA-like protein family.

In terms of biological role, involved in DNA repair and in homologous recombination. Binds and assemble on single-stranded DNA to form a nucleoprotein filament. Hydrolyzes ATP in a ssDNA-dependent manner and promotes DNA strand exchange between homologous DNA molecules. The sequence is that of DNA repair and recombination protein RadA from Pyrobaculum calidifontis (strain DSM 21063 / JCM 11548 / VA1).